A 506-amino-acid polypeptide reads, in one-letter code: Acetylcholine receptor subunit gamma (506 aa).

Residues 1-17 (MVLTLLLIICLALEVRS) form the signal peptide. Residues 18–235 (ENEEGRLIEK…IIFFLIIQRK (218 aa)) are Extracellular-facing. N85 carries N-linked (GlcNAc...) asparagine glycosylation. Residues C145 and C159 are joined by a disulfide bond. Transmembrane regions (helical) follow at residues 236–260 (PLFY…VYFL), 269–287 (CTLS…FLIA), and 303–324 (YLIF…VLNV). Residues 325 to 466 (SLRTPNTHSL…WVLIGKVIDK (142 aa)) lie on the Cytoplasmic side of the membrane. The residue at position 381 (Y381) is a Phosphotyrosine; by Tyr-kinases. The chain crosses the membrane as a helical span at residues 467-490 (ACFWIALLLFSIGTLAIFLTGHFN).

Belongs to the ligand-gated ion channel (TC 1.A.9) family. Acetylcholine receptor (TC 1.A.9.1) subfamily. Gamma/CHRNG sub-subfamily. As to quaternary structure, pentamer of two alpha chains, and one each of the beta, delta, and gamma chains. Seems not to be glycosylated on Asn-158.

Its subcellular location is the postsynaptic cell membrane. It localises to the cell membrane. The enzyme catalyses K(+)(in) = K(+)(out). The catalysed reaction is Na(+)(in) = Na(+)(out). Its function is as follows. After binding acetylcholine, the AChR responds by an extensive change in conformation that affects all subunits and leads to opening of an ion-conducting channel across the plasma membrane. The chain is Acetylcholine receptor subunit gamma (CHRNG) from Tetronarce californica (Pacific electric ray).